The sequence spans 94 residues: uncharacterized protein (94 aa).

Residues M1–A19 form the signal peptide.

This sequence belongs to the protease inhibitor I9 family.

This is an uncharacterized protein from Neurospora crassa (strain ATCC 24698 / 74-OR23-1A / CBS 708.71 / DSM 1257 / FGSC 987).